An 80-amino-acid chain; its full sequence is Small ribosomal subunit protein uS17 (80 aa).

The protein belongs to the universal ribosomal protein uS17 family. As to quaternary structure, part of the 30S ribosomal subunit.

Functionally, one of the primary rRNA binding proteins, it binds specifically to the 5'-end of 16S ribosomal RNA. The polypeptide is Small ribosomal subunit protein uS17 (Cereibacter sphaeroides (strain ATCC 17025 / ATH 2.4.3) (Rhodobacter sphaeroides)).